Consider the following 144-residue polypeptide: NADH dehydrogenase [ubiquinone] 1 alpha subcomplex subunit 13 (144 aa).

A2 bears the N-acetylalanine mark. Residues 30-51 (LSGYSMFAVGIGALLFGYWSMM) traverse the membrane as a helical segment.

As to quaternary structure, complex I is composed of 45 different subunits. Interacts with CARD15, but not with CARD4. Interacts with STAT3, but not with STAT1, STAT2 and STAT5A. Interacts with OLFM4.

It localises to the mitochondrion inner membrane. The protein localises to the nucleus. In terms of biological role, accessory subunit of the mitochondrial membrane respiratory chain NADH dehydrogenase (Complex I), that is believed not to be involved in catalysis. Complex I functions in the transfer of electrons from NADH to the respiratory chain. The immediate electron acceptor for the enzyme is believed to be ubiquinone. Involved in the interferon/all-trans-retinoic acid (IFN/RA) induced cell death. This apoptotic activity is inhibited by interaction with viral IRF1. Prevents the transactivation of STAT3 target genes. May play a role in CARD15-mediated innate mucosal responses and serve to regulate intestinal epithelial cell responses to microbes. This Bos taurus (Bovine) protein is NADH dehydrogenase [ubiquinone] 1 alpha subcomplex subunit 13 (NDUFA13).